A 472-amino-acid chain; its full sequence is Glutamate--tRNA ligase (472 aa).

The 'HIGH' region signature appears at P10 to G20. Residues C99, C101, C126, and D128 each contribute to the Zn(2+) site. The short motif at K238 to R242 is the 'KMSKS' region element. Position 241 (K241) interacts with ATP.

Belongs to the class-I aminoacyl-tRNA synthetase family. Glutamate--tRNA ligase type 1 subfamily. Monomer. Zn(2+) is required as a cofactor.

The protein localises to the cytoplasm. It carries out the reaction tRNA(Glu) + L-glutamate + ATP = L-glutamyl-tRNA(Glu) + AMP + diphosphate. Functionally, catalyzes the attachment of glutamate to tRNA(Glu) in a two-step reaction: glutamate is first activated by ATP to form Glu-AMP and then transferred to the acceptor end of tRNA(Glu). The sequence is that of Glutamate--tRNA ligase from Photorhabdus laumondii subsp. laumondii (strain DSM 15139 / CIP 105565 / TT01) (Photorhabdus luminescens subsp. laumondii).